A 161-amino-acid chain; its full sequence is Ethylene-responsive transcription factor ERF070 (161 aa).

Residues 1–35 are disordered; the sequence is MKRIIRISFTDAEATDSSSDEDTEERGGASQTRRR. The AP2/ERF DNA-binding region spans 78–140; that stretch reads KYRGVRQRPW…IGPHAPTNFG (63 aa).

This sequence belongs to the AP2/ERF transcription factor family. ERF subfamily.

The protein localises to the nucleus. Its function is as follows. Probably acts as a transcriptional activator. Binds to the GCC-box pathogenesis-related promoter element. May be involved in the regulation of gene expression by stress factors and by components of stress signal transduction pathways. This is Ethylene-responsive transcription factor ERF070 (ERF070) from Arabidopsis thaliana (Mouse-ear cress).